Consider the following 141-residue polypeptide: Large ribosomal subunit protein uL16 (141 aa).

It belongs to the universal ribosomal protein uL16 family. As to quaternary structure, part of the 50S ribosomal subunit.

Functionally, binds 23S rRNA and is also seen to make contacts with the A and possibly P site tRNAs. The sequence is that of Large ribosomal subunit protein uL16 from Deinococcus geothermalis (strain DSM 11300 / CIP 105573 / AG-3a).